Consider the following 150-residue polypeptide: MKIIFVFALLAIAACSASAQFDVLGQSYRQYQLQSPVLLQQQVLSPYNEFVRQQYGIAASPFLQSAAFQLRNNQVWQQLALVAQQSHYQDINIVQAIAQQLQLQQFGDLYFDRNLAQAQALLAFNVPSRYGIYPRYYGAPSTITTLGGVL.

A signal peptide spans 1-19 (MKIIFVFALLAIAACSASA). Q20 carries the post-translational modification Pyrrolidone carboxylic acid.

Belongs to the prolamin family.

The protein resides in the vacuole. The protein localises to the aleurone grain. Functionally, seed storage protein; serves as a source of nitrogen, carbon and sulfur for the young developing seedling. This is Prolamin PPROL 14E from Oryza sativa subsp. indica (Rice).